Here is a 37-residue protein sequence, read N- to C-terminus: Large ribosomal subunit protein bL36 (37 aa).

This sequence belongs to the bacterial ribosomal protein bL36 family.

The sequence is that of Large ribosomal subunit protein bL36 from Syntrophotalea carbinolica (strain DSM 2380 / NBRC 103641 / GraBd1) (Pelobacter carbinolicus).